The sequence spans 389 residues: Type 2 DNA topoisomerase 6 subunit A (389 aa).

The 149-residue stretch at 13-161 (KARLRAAEVM…MLILSKEKGK (149 aa)) folds into the Topo IIA-type catalytic domain. Tyrosine 107 acts as the O-(5'-phospho-DNA)-tyrosine intermediate in catalysis. Residues glutamate 208 and aspartate 260 each coordinate Mg(2+).

Belongs to the TOP6A family. In terms of assembly, homodimer. Heterotetramer of two Top6A and two Top6B chains. The cofactor is Mg(2+).

The enzyme catalyses ATP-dependent breakage, passage and rejoining of double-stranded DNA.. In terms of biological role, relaxes both positive and negative superturns and exhibits a strong decatenase activity. In Aeropyrum pernix (strain ATCC 700893 / DSM 11879 / JCM 9820 / NBRC 100138 / K1), this protein is Type 2 DNA topoisomerase 6 subunit A.